We begin with the raw amino-acid sequence, 1058 residues long: Isoleucine--tRNA ligase (1058 aa).

The 'HIGH' region motif lies at Pro-48–Thr-58. Positions Lys-596–Ser-600 match the 'KMSKS' region motif. Residue Lys-599 participates in ATP binding.

The protein belongs to the class-I aminoacyl-tRNA synthetase family. IleS type 2 subfamily. In terms of assembly, monomer. Zn(2+) serves as cofactor.

It is found in the cytoplasm. It carries out the reaction tRNA(Ile) + L-isoleucine + ATP = L-isoleucyl-tRNA(Ile) + AMP + diphosphate. Its function is as follows. Catalyzes the attachment of isoleucine to tRNA(Ile). As IleRS can inadvertently accommodate and process structurally similar amino acids such as valine, to avoid such errors it has two additional distinct tRNA(Ile)-dependent editing activities. One activity is designated as 'pretransfer' editing and involves the hydrolysis of activated Val-AMP. The other activity is designated 'posttransfer' editing and involves deacylation of mischarged Val-tRNA(Ile). The protein is Isoleucine--tRNA ligase of Methanosarcina barkeri (strain Fusaro / DSM 804).